Reading from the N-terminus, the 691-residue chain is Threonine--tRNA ligase (691 aa).

Positions 1-66 (MSAPARPAPA…DADVDVIPVT (66 aa)) constitute a TGS domain. The segment at 265–571 (DHRKLGVELD…LTEHYAGAFP (307 aa)) is catalytic. Residues Cys-370, His-421, and His-548 each contribute to the Zn(2+) site.

Belongs to the class-II aminoacyl-tRNA synthetase family. As to quaternary structure, homodimer. It depends on Zn(2+) as a cofactor.

The protein localises to the cytoplasm. The enzyme catalyses tRNA(Thr) + L-threonine + ATP = L-threonyl-tRNA(Thr) + AMP + diphosphate + H(+). Catalyzes the attachment of threonine to tRNA(Thr) in a two-step reaction: L-threonine is first activated by ATP to form Thr-AMP and then transferred to the acceptor end of tRNA(Thr). Also edits incorrectly charged L-seryl-tRNA(Thr). This Mycolicibacterium vanbaalenii (strain DSM 7251 / JCM 13017 / BCRC 16820 / KCTC 9966 / NRRL B-24157 / PYR-1) (Mycobacterium vanbaalenii) protein is Threonine--tRNA ligase.